Here is a 180-residue protein sequence, read N- to C-terminus: MLNLQVTGKTILSSIRCQRKMSSTCSSYAFGPYKIDPREVFYATPLSYAMVNLRPLLPAHVLVCPRRLVPRFTDLTADETSDLWLTAQKVGSKLETFHNASSLTLAIQDGPQAGQTVPHVHIHILPRKGGDFEKNDEIYDALDEKEKELKQKLDLDKDRVDRSIQEMADEASQYRSLFDC.

In terms of domain architecture, HIT spans serine 27–lysine 134. Residues asparagine 52 and glutamine 108 each contribute to the substrate site. A Histidine triad motif motif is present at residues histidine 119–histidine 123. Histidine 121 acts as the Tele-AMP-histidine intermediate in catalysis. Histidine 123 serves as a coordination point for substrate.

It catalyses the reaction P(1),P(3)-bis(5'-adenosyl) triphosphate + H2O = AMP + ADP + 2 H(+). It carries out the reaction adenosine 5'-phosphosulfate + H2O = sulfate + AMP + 2 H(+). The catalysed reaction is adenosine 5'-phosphosulfate + NH4(+) = adenosine 5'-phosphoramidate + sulfate + 2 H(+). The enzyme catalyses adenosine 5'-phosphoramidate + H2O = AMP + NH4(+). Its function is as follows. Possesses dinucleoside triphosphate hydrolase activity. Cleaves P(1)-P(3)-bis(5'-adenosyl) triphosphate (Ap3A) to yield AMP and ADP. Exhibits adenylylsulfatase activity, hydrolyzing adenosine 5'-phosphosulfate to yield AMP and sulfate. Exhibits adenosine 5'-monophosphoramidase activity, hydrolyzing purine nucleotide phosphoramidates with a single phosphate group such as adenosine 5'monophosphoramidate (AMP-NH2) to yield AMP and NH2. Exhibits adenylylsulfate-ammonia adenylyltransferase, catalyzing the ammonolysis of adenosine 5'-phosphosulfate resulting in the formation of adenosine 5'-phosphoramidate. This chain is Bifunctional bis(5'-adenosyl)-triphosphatase/adenylylsulfatase FHIT, found in Arabidopsis thaliana (Mouse-ear cress).